A 339-amino-acid chain; its full sequence is MSLPPVFGKELNMSQQLIDNFDRKFEYLRLSITDVCNFKCNYCLPDGYQRTHEKQFLSKQEITNLVNAFAELGAKKVRITGGEPALRKDFPKIIEAIATIPGIQKVATTTNGYNLSSHAQAWFDAGLDSINVSVDSLDAKTFHLITGKNIFQKVMQGVNASVKAGFKQVKINSVLMKGLNDIDIDLYINWIKDQPIQLRFIELMQTEDNGEFFNKHHLSGEWIKQNLLENGWTQKQSLSHDGPAQIFYHPDYLGEIGLIMPYSKDFCKSCNRLRVSSVGRLHLCLFGEEGVDLRDLLGTSADKEKLKQRIVESLKSKKVSHYLADGESGGTPHLASIGG.

Residues 20 to 241 (NFDRKFEYLR…WTQKQSLSHD (222 aa)) form the Radical SAM core domain. A GTP-binding site is contributed by Arg29. Residues Cys36 and Cys40 each coordinate [4Fe-4S] cluster. Tyr42 contacts S-adenosyl-L-methionine. Cys43 is a binding site for [4Fe-4S] cluster. Position 78 (Arg78) interacts with GTP. Gly82 is an S-adenosyl-L-methionine binding site. Thr109 serves as a coordination point for GTP. Ser133 lines the S-adenosyl-L-methionine pocket. A GTP-binding site is contributed by Lys170. Residue Met204 participates in S-adenosyl-L-methionine binding. Residues Cys267 and Cys270 each contribute to the [4Fe-4S] cluster site. Position 272 to 274 (272 to 274 (RLR)) interacts with GTP. A [4Fe-4S] cluster-binding site is contributed by Cys284.

It belongs to the radical SAM superfamily. MoaA family. Monomer and homodimer. The cofactor is [4Fe-4S] cluster.

It carries out the reaction GTP + AH2 + S-adenosyl-L-methionine = (8S)-3',8-cyclo-7,8-dihydroguanosine 5'-triphosphate + 5'-deoxyadenosine + L-methionine + A + H(+). It functions in the pathway cofactor biosynthesis; molybdopterin biosynthesis. Catalyzes the cyclization of GTP to (8S)-3',8-cyclo-7,8-dihydroguanosine 5'-triphosphate. The chain is GTP 3',8-cyclase from Psychromonas ingrahamii (strain DSM 17664 / CCUG 51855 / 37).